The primary structure comprises 1113 residues: Centrosomal protein of 131 kDa (1113 aa).

2 disordered regions span residues 78–97 (RRSN…LSSE) and 232–267 (KSQK…TEEE). The span at 79–97 (RSNSTTQVNQQANTSLSSE) shows a compositional bias: polar residues. Positions 238–257 (SSASSSSNNNAPRSPRSPGQ) are enriched in low complexity. Residues 259-371 (RRREVTEEEA…QQIAEQETEA (113 aa)) adopt a coiled-coil conformation. The IQ domain maps to 276–296 (NHAAIIIQRWYRRHVNSKRAN). Disordered regions lie at residues 306–331 (SKKK…EDDR), 368–401 (ETEA…NTDS), and 438–458 (SVSM…SKTT). The span at 307–331 (KKKEREQRAEEAKTTESLKKKEDDR) shows a compositional bias: basic and acidic residues. Residues 374-384 (HPGKVGRKKLT) show a composition bias toward basic residues. Residues 446–458 (QGASSSRAQSKTT) are compositionally biased toward low complexity. Residues 580 to 1111 (SMMRLRLELD…LLEQQRKQLL (532 aa)) adopt a coiled-coil conformation.

It belongs to the CEP131 family.

Its subcellular location is the chromosome. The protein resides in the centromere. The protein localises to the cytoplasm. It localises to the cytoskeleton. It is found in the microtubule organizing center. Its subcellular location is the centrosome. The protein resides in the centriolar satellite. The protein localises to the cilium basal body. It localises to the cytoplasmic vesicle. It is found in the secretory vesicle. Its subcellular location is the acrosome. In terms of biological role, cilium-specific protein required for the regulation of cilium/flagellum formation. Involved in centriole duplication. May play a role in melanosome trafficking. This chain is Centrosomal protein of 131 kDa (cep131), found in Danio rerio (Zebrafish).